Consider the following 923-residue polypeptide: Alanine--tRNA ligase (923 aa).

Residues His611, His615, Cys714, and His718 each coordinate Zn(2+).

This sequence belongs to the class-II aminoacyl-tRNA synthetase family. It depends on Zn(2+) as a cofactor.

The protein localises to the cytoplasm. It carries out the reaction tRNA(Ala) + L-alanine + ATP = L-alanyl-tRNA(Ala) + AMP + diphosphate. Functionally, catalyzes the attachment of alanine to tRNA(Ala) in a two-step reaction: alanine is first activated by ATP to form Ala-AMP and then transferred to the acceptor end of tRNA(Ala). Also edits incorrectly charged Ser-tRNA(Ala) and Gly-tRNA(Ala) via its editing domain. The polypeptide is Alanine--tRNA ligase (Methanosarcina barkeri (strain Fusaro / DSM 804)).